We begin with the raw amino-acid sequence, 170 residues long: Small ribosomal subunit protein bS18c (170 aa).

Disordered stretches follow at residues 1–59 and 151–170; these read MYIS…IGPG and NLRN…SSDC. 7 consecutive repeats follow at residues 4 to 10, 11 to 17, 18 to 24, 25 to 31, 32 to 38, 39 to 45, and 46 to 52; these read SKQPFRK, SKQTFHK, FKQPFRK, and SKQPFRR. The tract at residues 4-52 is 7 X 7 AA tandem repeats; sequence SKQPFRKSKQPFRKSKQTFHKSKQPFRKFKQPFRKSKQPFRKSKQPFRR. Residues 7–55 show a composition bias toward basic residues; that stretch reads PFRKSKQPFRKSKQTFHKSKQPFRKFKQPFRKSKQPFRKSKQPFRRRSR.

It belongs to the bacterial ribosomal protein bS18 family. As to quaternary structure, part of the 30S ribosomal subunit.

The protein resides in the plastid. It is found in the chloroplast. The polypeptide is Small ribosomal subunit protein bS18c (rps18) (Zea mays (Maize)).